Reading from the N-terminus, the 199-residue chain is HTH-type transcriptional repressor NemR (199 aa).

Positions 7-67 (HDTREHLLAT…AMLERHYAAY (61 aa)) constitute an HTH tetR-type domain. A DNA-binding region (H-T-H motif) is located at residues 30–49 (GLSELLKTAEVPKGSFYHYF).

In terms of biological role, involved in response to both electrophiles and reactive chlorine species (RCS). Represses the transcription of the nemRA-gloA operon by binding to the NemR box. In Escherichia coli O6:H1 (strain CFT073 / ATCC 700928 / UPEC), this protein is HTH-type transcriptional repressor NemR (nemR).